Here is a 736-residue protein sequence, read N- to C-terminus: Meiotic expression up-regulated protein 27 (736 aa).

Belongs to the UPF0300 family.

This chain is Meiotic expression up-regulated protein 27 (meu27), found in Schizosaccharomyces pombe (strain 972 / ATCC 24843) (Fission yeast).